A 180-amino-acid polypeptide reads, in one-letter code: UPF0227 protein YcfP (180 aa).

This sequence belongs to the UPF0227 family.

The protein is UPF0227 protein YcfP of Salmonella gallinarum (strain 287/91 / NCTC 13346).